The following is a 170-amino-acid chain: Cyclic pyranopterin monophosphate synthase (170 aa).

Residues Leu75–His77 and Met113–Glu114 each bind substrate. The active site involves Asp128.

The protein belongs to the MoaC family. In terms of assembly, homohexamer; trimer of dimers.

The enzyme catalyses (8S)-3',8-cyclo-7,8-dihydroguanosine 5'-triphosphate = cyclic pyranopterin phosphate + diphosphate. It participates in cofactor biosynthesis; molybdopterin biosynthesis. Its function is as follows. Catalyzes the conversion of (8S)-3',8-cyclo-7,8-dihydroguanosine 5'-triphosphate to cyclic pyranopterin monophosphate (cPMP). In Pelotomaculum thermopropionicum (strain DSM 13744 / JCM 10971 / SI), this protein is Cyclic pyranopterin monophosphate synthase.